The sequence spans 432 residues: Tol-Pal system protein TolB (432 aa).

The N-terminal stretch at Met1–Ala21 is a signal peptide.

This sequence belongs to the TolB family. The Tol-Pal system is composed of five core proteins: the inner membrane proteins TolA, TolQ and TolR, the periplasmic protein TolB and the outer membrane protein Pal. They form a network linking the inner and outer membranes and the peptidoglycan layer.

The protein resides in the periplasm. In terms of biological role, part of the Tol-Pal system, which plays a role in outer membrane invagination during cell division and is important for maintaining outer membrane integrity. This Pseudomonas aeruginosa (strain ATCC 15692 / DSM 22644 / CIP 104116 / JCM 14847 / LMG 12228 / 1C / PRS 101 / PAO1) protein is Tol-Pal system protein TolB.